A 414-amino-acid chain; its full sequence is Tyrosine--tRNA ligase (414 aa).

Y38 contributes to the L-tyrosine binding site. The 'HIGH' region motif lies at 43 to 52 (PTAISLHLGN). 2 residues coordinate L-tyrosine: Y165 and Q169. The 'KMSKS' region motif lies at 227 to 231 (KIGKS). K230 contributes to the ATP binding site. Residues 349–413 (DDLFLTLVDS…KGKKQYWVIY (65 aa)) enclose the S4 RNA-binding domain.

This sequence belongs to the class-I aminoacyl-tRNA synthetase family. TyrS type 1 subfamily. Homodimer.

Its subcellular location is the cytoplasm. It carries out the reaction tRNA(Tyr) + L-tyrosine + ATP = L-tyrosyl-tRNA(Tyr) + AMP + diphosphate + H(+). Its function is as follows. Catalyzes the attachment of tyrosine to tRNA(Tyr) in a two-step reaction: tyrosine is first activated by ATP to form Tyr-AMP and then transferred to the acceptor end of tRNA(Tyr). In Mycoplasmopsis pulmonis (strain UAB CTIP) (Mycoplasma pulmonis), this protein is Tyrosine--tRNA ligase.